The chain runs to 150 residues: Peptide deformylase (150 aa).

Fe cation is bound by residues C88 and H130. Residue E131 is part of the active site. Residue H134 participates in Fe cation binding.

Belongs to the polypeptide deformylase family. Fe(2+) is required as a cofactor.

The enzyme catalyses N-terminal N-formyl-L-methionyl-[peptide] + H2O = N-terminal L-methionyl-[peptide] + formate. In terms of biological role, removes the formyl group from the N-terminal Met of newly synthesized proteins. Requires at least a dipeptide for an efficient rate of reaction. N-terminal L-methionine is a prerequisite for activity but the enzyme has broad specificity at other positions. The chain is Peptide deformylase from Desulfitobacterium hafniense (strain DSM 10664 / DCB-2).